The chain runs to 217 residues: Proteasome subunit beta type-6-A like protein (217 aa).

Positions 1–16 (MERHLMDSQIKGVSTG) are cleaved as a propeptide — removed in mature form. Thr-17 functions as the Nucleophile in the catalytic mechanism.

It belongs to the peptidase T1B family. As to quaternary structure, the 26S proteasome consists of a 20S proteasome core and two 19S regulatory subunits. The 20S proteasome core is composed of 28 subunits that are arranged in four stacked rings, resulting in a barrel-shaped structure. The two end rings are each formed by seven alpha subunits, and the two central rings are each formed by seven beta subunits. The catalytic chamber with the active sites is on the inside of the barrel.

Its subcellular location is the cytoplasm. It localises to the nucleus. The enzyme catalyses Cleavage of peptide bonds with very broad specificity.. Functionally, the proteasome is a multicatalytic proteinase complex which is characterized by its ability to cleave peptides with Arg, Phe, Tyr, Leu, and Glu adjacent to the leaving group at neutral or slightly basic pH. The proteasome has an ATP-dependent proteolytic activity. This subunit is involved in antigen processing to generate class I binding peptides. This Salmo salar (Atlantic salmon) protein is Proteasome subunit beta type-6-A like protein (psmb6l-a).